The chain runs to 61 residues: Conotoxin Cal14.6 (61 aa).

Residues 1 to 21 (MKFLLFLSVALLLTSFIETEA) form the signal peptide. Residues 22-38 (GPVNEAGVERLFRALVG) constitute a propeptide that is removed on maturation. P57 is subject to 4-hydroxyproline; partial. P60 is subject to Proline amide.

In terms of processing, contains 2 disulfide bonds. As to expression, expressed by the venom duct.

The protein localises to the secreted. Probable neurotoxin with unknown target. Possibly targets ion channels. The sequence is that of Conotoxin Cal14.6 from Californiconus californicus (California cone).